The following is a 425-amino-acid chain: Serine/threonine-protein kinase VRK1 (425 aa).

Residues 38 to 329 (WKLGSAVGQG…KLRGILQQGL (292 aa)) form the Protein kinase domain. ATP-binding positions include 44-52 (VGQGGFGLL) and Lys72. The active-site Proton acceptor is Asp178. Residues 343–425 (GVATNSTSLP…KSRGRPKKNS (83 aa)) form a disordered region. Positions 415 to 425 (KKSRGRPKKNS) are enriched in basic residues.

It belongs to the protein kinase superfamily. CK1 Ser/Thr protein kinase family. VRK subfamily.

The protein localises to the nucleus. It localises to the cytoplasm. The protein resides in the cajal body. It carries out the reaction L-seryl-[protein] + ATP = O-phospho-L-seryl-[protein] + ADP + H(+). The catalysed reaction is L-threonyl-[protein] + ATP = O-phospho-L-threonyl-[protein] + ADP + H(+). Serine/threonine kinase involved in the regulation of key cellular processes including the cell cycle, nuclear condensation, transcription regulation, and DNA damage response. Controls chromatin organization and remodeling by mediating phosphorylation of histone H3 on 'Thr-4' and histone H2AX (H2aXT4ph). It also phosphorylates KAT5 in response to DNA damage, promoting KAT5 association with chromatin and histone acetyltransferase activity. Is involved in the regulation of cell cycle progression of neural progenitors, and is required for proper cortical neuronal migration. Is involved in neurite elongation and branching in motor neurons, and has an essential role in Cajal bodies assembly, acting through COIL phosphorylation and the control of coilin degradation. Involved in Golgi disassembly during the cell cycle: following phosphorylation by PLK3 during mitosis, it is required to induce Golgi fragmentation. Phosphorylates BANF1: disrupts its ability to bind DNA, reduces its binding to LEM domain-containing proteins and causes its relocalization from the nucleus to the cytoplasm. Phosphorylates TP53BP1 and p53/TP53 on 'Thr-18', preventing the interaction between p53/TP53 and MDM2. Phosphorylates ATF2 which activates its transcriptional activity. Phosphorylates JUN. This chain is Serine/threonine-protein kinase VRK1 (vrk1), found in Danio rerio (Zebrafish).